Consider the following 177-residue polypeptide: Antigen TpF1 (177 aa).

This sequence belongs to the Dps family. In terms of assembly, homodecamer; either linked or stabilized by disulfide bonds.

Functionally, may play an important structural role in the outer membrane. This chain is Antigen TpF1 (tpf1), found in Treponema pallidum (strain Nichols).